The sequence spans 402 residues: 1-deoxy-D-xylulose 5-phosphate reductoisomerase (402 aa).

Residues Thr-27, Gly-28, Ser-29, Ile-30, Gly-53, Lys-54, Asn-55, and Asn-140 each contribute to the NADPH site. Lys-141 serves as a coordination point for 1-deoxy-D-xylulose 5-phosphate. Glu-142 is a binding site for NADPH. Residue Asp-166 participates in Mn(2+) binding. The 1-deoxy-D-xylulose 5-phosphate site is built by Ser-167, Glu-168, Ser-192, and His-215. Glu-168 is a Mn(2+) binding site. Position 221 (Gly-221) interacts with NADPH. Residues Ser-228, Asn-233, Lys-234, and Glu-237 each contribute to the 1-deoxy-D-xylulose 5-phosphate site. Glu-237 lines the Mn(2+) pocket.

Belongs to the DXR family. Mg(2+) is required as a cofactor. Mn(2+) serves as cofactor.

The catalysed reaction is 2-C-methyl-D-erythritol 4-phosphate + NADP(+) = 1-deoxy-D-xylulose 5-phosphate + NADPH + H(+). It participates in isoprenoid biosynthesis; isopentenyl diphosphate biosynthesis via DXP pathway; isopentenyl diphosphate from 1-deoxy-D-xylulose 5-phosphate: step 1/6. Catalyzes the NADPH-dependent rearrangement and reduction of 1-deoxy-D-xylulose-5-phosphate (DXP) to 2-C-methyl-D-erythritol 4-phosphate (MEP). The protein is 1-deoxy-D-xylulose 5-phosphate reductoisomerase of Lawsonia intracellularis (strain PHE/MN1-00).